Consider the following 503-residue polypeptide: Zinc-regulated transporter 3 (503 aa).

3 helical membrane passes run 8-28 (LLFS…VPLL), 42-62 (LVNY…LYML), and 75-95 (FPGL…VHAF). Positions 112-171 (GSHIHSKSHSHSHSHSHADSHSNFSNDHDLENAPSEHGYATSSSSVSENDPLITKDSDRP) are disordered. Positions 115–126 (IHSKSHSHSHSH) are enriched in basic residues. Residues 127–142 (SHADSHSNFSNDHDLE) show a composition bias toward basic and acidic residues. 2 positions are modified to phosphoserine: S178 and S188. 2 disordered regions span residues 221–244 (QSER…DKDH) and 274–295 (HHSS…FSSP). The segment covering 280-295 (PENYGSNQLSHSFSSP) has biased composition (polar residues). The next 5 membrane-spanning stretches (helical) occupy residues 336-356 (IGMQ…FIIF), 371-391 (IFLS…LPFY), 398-418 (WVAI…GALI), 438-458 (LLSV…QTGI), and 482-502 (GTTC…SALF).

It belongs to the ZIP transporter (TC 2.A.5) family.

The protein localises to the vacuole membrane. Functionally, transports zinc from storage in the vacuole to the cytoplasm. The protein is Zinc-regulated transporter 3 (ZRT3) of Saccharomyces cerevisiae (strain ATCC 204508 / S288c) (Baker's yeast).